A 132-amino-acid polypeptide reads, in one-letter code: Fatty acid-binding protein, adipocyte (132 aa).

N-acetylcysteine is present on C2. S13 carries the phosphoserine modification. Position 20 is a phosphotyrosine; by Tyr-kinases (Y20). The Nuclear localization signal motif lies at 22-32 (KEVGVGFATRK). Position 127–129 (127–129 (RVY)) interacts with a fatty acid.

It belongs to the calycin superfamily. Fatty-acid binding protein (FABP) family. Monomer. Homodimer. Interacts with PPARG.

It is found in the cytoplasm. It localises to the nucleus. Functionally, lipid transport protein in adipocytes. Binds both long chain fatty acids and retinoic acid. Delivers long-chain fatty acids and retinoic acid to their cognate receptors in the nucleus. In Mus musculus (Mouse), this protein is Fatty acid-binding protein, adipocyte (Fabp4).